A 332-amino-acid chain; its full sequence is Very-long-chain 3-oxoacyl-CoA reductase (332 aa).

Residues 15 to 35 (GQWALAGIGALYVATRVGAFL) traverse the membrane as a helical segment. 9 residues coordinate NADP(+): Val60, Asp115, Asp123, Asn142, Lys177, Tyr209, Lys213, Val242, and Thr244. Residue Tyr209 is the Proton donor of the active site. Lys213 functions as the Lowers pKa of active site Tyr in the catalytic mechanism.

It belongs to the short-chain dehydrogenases/reductases (SDR) family.

It localises to the endoplasmic reticulum membrane. The catalysed reaction is a very-long-chain (3R)-3-hydroxyacyl-CoA + NADP(+) = a very-long-chain 3-oxoacyl-CoA + NADPH + H(+). The protein operates within lipid metabolism; fatty acid biosynthesis. Its function is as follows. Component of the microsomal membrane bound fatty acid elongation system, which produces the 26-carbon very long-chain fatty acids (VLCFA) from palmitate. Catalyzes the reduction of the 3-ketoacyl-CoA intermediate that is formed in each cycle of fatty acid elongation. VLCFAs serve as precursors for ceramide and sphingolipids. This chain is Very-long-chain 3-oxoacyl-CoA reductase, found in Neurospora crassa (strain ATCC 24698 / 74-OR23-1A / CBS 708.71 / DSM 1257 / FGSC 987).